Consider the following 317-residue polypeptide: Cold tolerance protein 1 (317 aa).

Belongs to the CTO1 family.

Its function is as follows. Protein required for cold tolerance. Plays a role in the regulation of phosphate uptake. The chain is Cold tolerance protein 1 from Saccharomyces cerevisiae (strain ATCC 204508 / S288c) (Baker's yeast).